Reading from the N-terminus, the 210-residue chain is uncharacterized protein (210 aa).

The protein localises to the mitochondrion. This is an uncharacterized protein from Schizosaccharomyces pombe (strain 972 / ATCC 24843) (Fission yeast).